The following is an 835-amino-acid chain: Microcephalin (835 aa).

Residues 1-93 enclose the BRCT 1 domain; it reads MAAPILKDVV…AHIDESLFPA (93 aa). 4 positions are modified to phosphoserine: S279, S287, S296, and S333. Disordered regions lie at residues 332 to 376 and 417 to 442; these read LSPT…RKRS and SPDNLKERNSENLPPESQLPSSPAQF. T335 carries the phosphothreonine modification. Residues 343-361 are compositionally biased toward basic residues; it reads LLIHSRPRSSSVKRKRVSH. At S548 the chain carries Phosphoserine. The segment at 555–583 is disordered; that stretch reads AVDLKSTQNKGTTSKISNSSEGEAQSEHE. Residues 559-577 show a composition bias toward polar residues; it reads KSTQNKGTTSKISNSSEGE. 2 BRCT domains span residues 640-730 and 751-833; these read SGRG…PFEL and YRGT…NYLL.

As to quaternary structure, interacts with CDC27 and maybe other components of the APC/C complex. Interacts with histone variant H2AX under DNA damage conditions.

The protein resides in the cytoplasm. Its subcellular location is the cytoskeleton. It is found in the microtubule organizing center. It localises to the centrosome. Functionally, implicated in chromosome condensation and DNA damage induced cellular responses. May play a role in neurogenesis and regulation of the size of the cerebral cortex. The polypeptide is Microcephalin (Pan troglodytes (Chimpanzee)).